The sequence spans 116 residues: UPF0482 protein PC1_2049 (116 aa).

Positions Met-1 to Ala-31 are cleaved as a signal peptide.

It belongs to the UPF0482 family.

The protein is UPF0482 protein PC1_2049 of Pectobacterium carotovorum subsp. carotovorum (strain PC1).